A 260-amino-acid chain; its full sequence is Factor V activator RVV-V gamma (260 aa).

An N-terminal signal peptide occupies residues 1-18 (MVLIKVLANLLVLQLSYA). The propeptide occupies 19–24 (QKSSEL). A Peptidase S1 domain is found at 25–251 (VVGGDECNIN…YNNWIQSIIA (227 aa)). Disulfide bonds link cysteine 31-cysteine 165, cysteine 52-cysteine 68, cysteine 100-cysteine 258, cysteine 144-cysteine 212, cysteine 176-cysteine 191, and cysteine 202-cysteine 227. Catalysis depends on charge relay system residues histidine 67 and aspartate 112. Serine 206 serves as the catalytic Charge relay system. An N-linked (GlcNAc...) asparagine glycan is attached at asparagine 253.

Belongs to the peptidase S1 family. Snake venom subfamily. Monomer. As to expression, expressed by the venom gland.

It is found in the secreted. It catalyses the reaction Fully activates human clotting factor V by a single cleavage at the 1545-Trp-Tyr-Leu-Arg-|-Ser-Asn-Asn-Gly-1552 bond. Cattle, but not rabbit, factor V is cleaved, and no other proteins of the clotting system are attacked. Esterase activity is observed on Bz-Arg-OEt and Tos-Arg-OMe, and amidase activity on Phe-pipecolyl-Arg-NHPhNO2.. Its function is as follows. Venom serine protease that selectively activates factor V (F5) in a calcium-independent manner. It cleaves the Arg(1545)-Ser(1546) linkage in the human factor V molecule. Induces the coagulation of mammalian plasma. The protein is Factor V activator RVV-V gamma of Daboia siamensis (Eastern Russel's viper).